We begin with the raw amino-acid sequence, 601 residues long: MTAHPIKNIRNFSIVAHIDHGKSTLADRLIQQTGAVAARDMVEQVLDSMDIERERGITIKAQTVRLEYKAADGEAYILNLMDTPGHVDFAYEVSRSLAACEGSLLVVDASQGVEAQTLANVYHALDAGHEIVPVLNKIDLPAAEPERIKQQIEDVIGLDASHAVMISAKTGVGIDLVLEAIVTRLPPPQGDETAPLKALLVDSWYDAYLGVVVLVRVIDGVLRKGQKIKMMAADAHYEVDRIGVFRPKMQDAEQLSPGEIGFITAQIKQVADTRVGDTITDERRPCAQALPGFKPAQPVVFCGLFPVDAADFEDLRAAMGRLRLNDASFSYEMESSAALGFGFRCGFLGLLHLEIIQERLEREFNLDLIATAPSVIYKIVQRDGDTIELHNPADMPDPTKIETIEEPWIRATILTPDDYLGAVLKLCQERRGVQVDLNYVGKRAMAVYDLPLNEVVFDFYDRLKSISKGYASFDYAITDYRPGDLVKMSILVNAEPVDALSMLVHRDRADTRGRVMVEKLKELIPPHMFQIPIQAAIGGKIIARETVRALRKDVTAKCYGGDASRKRKLLDKQKAGKKKMRQFGKVEIPQEAFIAALKMDG.

Residues Lys7–Gln189 enclose the tr-type G domain. GTP is bound by residues Asp19–Thr24 and Asn136–Asp139.

It belongs to the TRAFAC class translation factor GTPase superfamily. Classic translation factor GTPase family. LepA subfamily.

It is found in the cell inner membrane. It catalyses the reaction GTP + H2O = GDP + phosphate + H(+). In terms of biological role, required for accurate and efficient protein synthesis under certain stress conditions. May act as a fidelity factor of the translation reaction, by catalyzing a one-codon backward translocation of tRNAs on improperly translocated ribosomes. Back-translocation proceeds from a post-translocation (POST) complex to a pre-translocation (PRE) complex, thus giving elongation factor G a second chance to translocate the tRNAs correctly. Binds to ribosomes in a GTP-dependent manner. This is Elongation factor 4 from Methylocella silvestris (strain DSM 15510 / CIP 108128 / LMG 27833 / NCIMB 13906 / BL2).